A 485-amino-acid chain; its full sequence is Iroquois-class homeodomain protein IRX-4 (485 aa).

The segment at residues 142-203 (GTRRKNATRE…NARRRLKKEN (62 aa)) is a DNA-binding region (homeobox; TALE-type). Residues 206–313 (TWPPRNKCSD…EEEEAAERAR (108 aa)) are disordered. Over residues 221-232 (EEEEEEEEECSQ) the composition is skewed to acidic residues. Residues 234-253 (DAMKSEKAEEPTGKEEKELE) show a composition bias toward basic and acidic residues. Residues 254–269 (LSDLEDLDAAESESSE) are compositionally biased toward acidic residues. The segment covering 282 to 294 (HPLPGGGPPPRAA) has biased composition (pro residues).

It belongs to the TALE/IRO homeobox family. As to expression, ventricles of the heart, developing feather buds, retina, hindbrain.

Its subcellular location is the nucleus. Regulates the chamber-specific expression of myosin isoforms by activating the expression of the ventricle myosin heavy chain-1 (Vmhc1) and suppressing the expression of the atrial myosin heavy chain-1 (Amhc1) in the ventricles. May play a critical role in establishing chamber-specific gene expression in the developing heart. This is Iroquois-class homeodomain protein IRX-4 (IRX4) from Gallus gallus (Chicken).